The following is a 147-amino-acid chain: SsrA-binding protein (147 aa).

The disordered stretch occupies residues 119–147 (AKGKKQHDKRESEKQKEWERDKQRLMRPK). Residues 126–147 (DKRESEKQKEWERDKQRLMRPK) are compositionally biased toward basic and acidic residues.

It belongs to the SmpB family.

Its subcellular location is the cytoplasm. Required for rescue of stalled ribosomes mediated by trans-translation. Binds to transfer-messenger RNA (tmRNA), required for stable association of tmRNA with ribosomes. tmRNA and SmpB together mimic tRNA shape, replacing the anticodon stem-loop with SmpB. tmRNA is encoded by the ssrA gene; the 2 termini fold to resemble tRNA(Ala) and it encodes a 'tag peptide', a short internal open reading frame. During trans-translation Ala-aminoacylated tmRNA acts like a tRNA, entering the A-site of stalled ribosomes, displacing the stalled mRNA. The ribosome then switches to translate the ORF on the tmRNA; the nascent peptide is terminated with the 'tag peptide' encoded by the tmRNA and targeted for degradation. The ribosome is freed to recommence translation, which seems to be the essential function of trans-translation. The polypeptide is SsrA-binding protein (Nitrosospira multiformis (strain ATCC 25196 / NCIMB 11849 / C 71)).